The primary structure comprises 105 residues: Replication restart protein PriB (105 aa).

The SSB domain occupies 1–102; sequence MTANRLTLSG…LHAEQIELID (102 aa).

The protein belongs to the PriB family. As to quaternary structure, homodimer. Interacts with PriA and DnaT. Component of the replication restart primosome. Primosome assembly occurs via a 'hand-off' mechanism. PriA binds to replication forks, subsequently PriB then DnaT bind; DnaT then displaces ssDNA to generate the helicase loading substrate.

Functionally, involved in the restart of stalled replication forks, which reloads the replicative helicase on sites other than the origin of replication; the PriA-PriB pathway is the major replication restart pathway. During primosome assembly it facilitates complex formation between PriA and DnaT on DNA; stabilizes PriA on DNA. Stimulates the DNA unwinding activity of PriA helicase. The protein is Replication restart protein PriB of Serratia proteamaculans (strain 568).